A 492-amino-acid polypeptide reads, in one-letter code: Glutamyl-tRNA(Gln) amidotransferase subunit A (492 aa).

Catalysis depends on charge relay system residues lysine 79 and serine 154. Catalysis depends on serine 178, which acts as the Acyl-ester intermediate.

The protein belongs to the amidase family. GatA subfamily. In terms of assembly, heterotrimer of A, B and C subunits.

The catalysed reaction is L-glutamyl-tRNA(Gln) + L-glutamine + ATP + H2O = L-glutaminyl-tRNA(Gln) + L-glutamate + ADP + phosphate + H(+). In terms of biological role, allows the formation of correctly charged Gln-tRNA(Gln) through the transamidation of misacylated Glu-tRNA(Gln) in organisms which lack glutaminyl-tRNA synthetase. The reaction takes place in the presence of glutamine and ATP through an activated gamma-phospho-Glu-tRNA(Gln). This chain is Glutamyl-tRNA(Gln) amidotransferase subunit A, found in Acinetobacter baumannii (strain AB0057).